Reading from the N-terminus, the 100-residue chain is Small ribosomal subunit protein uS14c (100 aa).

The protein belongs to the universal ribosomal protein uS14 family. As to quaternary structure, part of the 30S ribosomal subunit.

Its subcellular location is the plastid. The protein resides in the chloroplast. Functionally, binds 16S rRNA, required for the assembly of 30S particles. The chain is Small ribosomal subunit protein uS14c from Staurastrum punctulatum (Green alga).